Here is a 212-residue protein sequence, read N- to C-terminus: Orotate phosphoribosyltransferase (212 aa).

Residues Arg97, Lys101, His103, and Asp123–Ser131 contribute to the 5-phospho-alpha-D-ribose 1-diphosphate site. Residue Ser127 participates in orotate binding.

It belongs to the purine/pyrimidine phosphoribosyltransferase family. PyrE subfamily. As to quaternary structure, homodimer. Mg(2+) is required as a cofactor.

The catalysed reaction is orotidine 5'-phosphate + diphosphate = orotate + 5-phospho-alpha-D-ribose 1-diphosphate. It participates in pyrimidine metabolism; UMP biosynthesis via de novo pathway; UMP from orotate: step 1/2. Catalyzes the transfer of a ribosyl phosphate group from 5-phosphoribose 1-diphosphate to orotate, leading to the formation of orotidine monophosphate (OMP). The chain is Orotate phosphoribosyltransferase from Lactiplantibacillus plantarum (strain ATCC BAA-793 / NCIMB 8826 / WCFS1) (Lactobacillus plantarum).